Consider the following 68-residue polypeptide: MKFSTFDINDEFIANIDYTEEDSRYVGIIYITSKTAQGVVCMAEFDEYFLDYDDMIEWSKRYIKRNLL.

This is an uncharacterized protein from Enterobacteria phage T4 (Bacteriophage T4).